A 163-amino-acid chain; its full sequence is NADH-quinone oxidoreductase subunit I (163 aa).

2 consecutive 4Fe-4S ferredoxin-type domains span residues 53 to 83 (LRRYPNGEERCIACKLCEAICPAQAITIEAG) and 94 to 123 (VRYDIDMVKCIYCGFCQEACPVDAIVEGPN). 8 residues coordinate [4Fe-4S] cluster: Cys63, Cys66, Cys69, Cys73, Cys103, Cys106, Cys109, and Cys113.

This sequence belongs to the complex I 23 kDa subunit family. NDH-1 is composed of 14 different subunits. Subunits NuoA, H, J, K, L, M, N constitute the membrane sector of the complex. [4Fe-4S] cluster is required as a cofactor.

It localises to the cell inner membrane. The enzyme catalyses a quinone + NADH + 5 H(+)(in) = a quinol + NAD(+) + 4 H(+)(out). Functionally, NDH-1 shuttles electrons from NADH, via FMN and iron-sulfur (Fe-S) centers, to quinones in the respiratory chain. The immediate electron acceptor for the enzyme in this species is believed to be ubiquinone. Couples the redox reaction to proton translocation (for every two electrons transferred, four hydrogen ions are translocated across the cytoplasmic membrane), and thus conserves the redox energy in a proton gradient. This Brucella abortus (strain S19) protein is NADH-quinone oxidoreductase subunit I.